A 504-amino-acid chain; its full sequence is Maturase K (504 aa).

This sequence belongs to the intron maturase 2 family. MatK subfamily.

Its subcellular location is the plastid. The protein resides in the chloroplast. Functionally, usually encoded in the trnK tRNA gene intron. Probably assists in splicing its own and other chloroplast group II introns. This Calyptranthes pallens (Spicewood) protein is Maturase K.